A 421-amino-acid chain; its full sequence is MTQTLSLRAVLCATTLVSPFLAQAATESEVEALKKELLELRQRYEAQQNALMVLEQRVRQVEAQPQAPQPQRLVKSIQPPAQARNDANAVAGTYGASLKDDGAPAPSVENIYQDASGFFGGGTFSLETGLTYSHYDTRQLFLNGFLALDSIFLGNIGVDQIDADIWTLDLTGRYNWNQRWQVDINAPVVYRESTYQSAGAGGSTSQITEKSVTGDPRLGDVSFGVAYKFLDESESTPDAVVSLRVKAPTGKDPYGIKLKQVPGNNNLNVPDDLPTGNGVWSITPGISLVKTVDPAVLFGSLSYTYNFEESFDDINPQQGVKTGGKVKLGNWFQLGVGVAFALNEKMSMSFSFSELISQKSKVKQDGQSWQTVSGSDANAGYFGLGMTYAVSNRFSIVPSLSIGITPDAPDFTFGVKFPYYF.

The N-terminal stretch at 1–24 (MTQTLSLRAVLCATTLVSPFLAQA) is a signal peptide. A coiled-coil region spans residues 23-64 (QAATESEVEALKKELLELRQRYEAQQNALMVLEQRVRQVEAQ).

It belongs to the amyloid transporter (TC 9.B.153) family.

The protein resides in the secreted. Its subcellular location is the cell surface. It localises to the cell outer membrane. Transports fibril components across the outer membrane. Upon overexpression of the endogenous six-gene locus (fapA-fapF), cells form large clumps during liquid growth, make large amounts of biofilm and produce amyloid fibrils. This chain is Functional amyloid transporter FapF, found in Pseudomonas aeruginosa (strain ATCC 15692 / DSM 22644 / CIP 104116 / JCM 14847 / LMG 12228 / 1C / PRS 101 / PAO1).